The primary structure comprises 418 residues: Nucleoside permease NupC (418 aa).

9 helical membrane-spanning segments follow: residues 2 to 22 (IFSS…AWVF), 34 to 54 (IVSA…VPLG), 93 to 113 (IGGF…ASLI), 174 to 194 (IFAV…AGYA), 198 to 218 (IPLP…LLFA), 264 to 284 (LLAF…VGGF), 292 to 314 (LGLI…WSQA), 354 to 374 (AIIT…MLIG), and 395 to 415 (VLVG…FIGL).

It belongs to the concentrative nucleoside transporter (CNT) (TC 2.A.41) family.

Its subcellular location is the cell inner membrane. Involved in purine nucleosides uptake. Could also be involved in uptake of nucleobases. This Helicobacter pylori (strain ATCC 700392 / 26695) (Campylobacter pylori) protein is Nucleoside permease NupC.